A 228-amino-acid polypeptide reads, in one-letter code: Ribulose-phosphate 3-epimerase (228 aa).

Serine 12 is a binding site for substrate. A divalent metal cation-binding residues include histidine 37, aspartate 39, and histidine 70. Aspartate 39 (proton acceptor) is an active-site residue. Residues histidine 70, 146–149 (GFGG), 176–178 (DGG), and 198–199 (GS) contribute to the substrate site. Residue aspartate 176 participates in a divalent metal cation binding. The Proton donor role is filled by aspartate 176.

The protein belongs to the ribulose-phosphate 3-epimerase family. A divalent metal cation serves as cofactor.

It carries out the reaction D-ribulose 5-phosphate = D-xylulose 5-phosphate. It participates in carbohydrate degradation. Its function is as follows. Catalyzes the reversible epimerization of D-ribulose 5-phosphate to D-xylulose 5-phosphate. The chain is Ribulose-phosphate 3-epimerase from Rhodobacter capsulatus (Rhodopseudomonas capsulata).